Reading from the N-terminus, the 527-residue chain is Bifunctional purine biosynthesis protein PurH (527 aa).

Residues 1–149 (MASDFLPVRR…KNFARVAVAT (149 aa)) enclose the MGS-like domain.

Belongs to the PurH family.

The enzyme catalyses (6R)-10-formyltetrahydrofolate + 5-amino-1-(5-phospho-beta-D-ribosyl)imidazole-4-carboxamide = 5-formamido-1-(5-phospho-D-ribosyl)imidazole-4-carboxamide + (6S)-5,6,7,8-tetrahydrofolate. It catalyses the reaction IMP + H2O = 5-formamido-1-(5-phospho-D-ribosyl)imidazole-4-carboxamide. It functions in the pathway purine metabolism; IMP biosynthesis via de novo pathway; 5-formamido-1-(5-phospho-D-ribosyl)imidazole-4-carboxamide from 5-amino-1-(5-phospho-D-ribosyl)imidazole-4-carboxamide (10-formyl THF route): step 1/1. The protein operates within purine metabolism; IMP biosynthesis via de novo pathway; IMP from 5-formamido-1-(5-phospho-D-ribosyl)imidazole-4-carboxamide: step 1/1. The protein is Bifunctional purine biosynthesis protein PurH of Xanthomonas oryzae pv. oryzae (strain KACC10331 / KXO85).